Consider the following 58-residue polypeptide: MAFDKKLLEIVACPVCKGKLDYDKESQQLICKFDKLAYPITEGIPVLLENRATAIVTE.

This sequence belongs to the UPF0434 family.

In Shewanella frigidimarina (strain NCIMB 400), this protein is UPF0434 protein Sfri_2386.